Consider the following 557-residue polypeptide: Formate--tetrahydrofolate ligase (557 aa).

Position 67–74 (67–74 (TPAGEGKT)) interacts with ATP.

Belongs to the formate--tetrahydrofolate ligase family.

The catalysed reaction is (6S)-5,6,7,8-tetrahydrofolate + formate + ATP = (6R)-10-formyltetrahydrofolate + ADP + phosphate. It functions in the pathway one-carbon metabolism; tetrahydrofolate interconversion. This is Formate--tetrahydrofolate ligase from Cereibacter sphaeroides (strain ATCC 17025 / ATH 2.4.3) (Rhodobacter sphaeroides).